The sequence spans 719 residues: Polyphosphate kinase (719 aa).

N54 contributes to the ATP binding site. Residues R379 and R409 each coordinate Mg(2+). The PLD phosphodiesterase domain occupies T434–T468. Catalysis depends on H439, which acts as the Phosphohistidine intermediate. ATP is bound by residues Y472, R568, and H596.

Belongs to the polyphosphate kinase 1 (PPK1) family. Mg(2+) serves as cofactor. In terms of processing, an intermediate of this reaction is the autophosphorylated ppk in which a phosphate is covalently linked to a histidine residue through a N-P bond.

It catalyses the reaction [phosphate](n) + ATP = [phosphate](n+1) + ADP. Its function is as follows. Catalyzes the reversible transfer of the terminal phosphate of ATP to form a long-chain polyphosphate (polyP). This chain is Polyphosphate kinase, found in Staphylococcus saprophyticus subsp. saprophyticus (strain ATCC 15305 / DSM 20229 / NCIMB 8711 / NCTC 7292 / S-41).